We begin with the raw amino-acid sequence, 581 residues long: Suppressor of cytokine signaling 7 (581 aa).

Disordered regions lie at residues 1–23 (MVFRNVGRPPEEEDVEAAPEPGP), 89–109 (PPPPQPQPPAAAPQAGEDPTE), 123–272 (EAES…RTQS), and 297–316 (QRGLTSPHPPTPPPPPRRSL). Composition is skewed to pro residues over residues 89–99 (PPPPQPQPPAA), 154–164 (PPGPELPPVPF), and 187–198 (QPPPPPPPPGPL). A mediates interaction with SORBS3 region spans residues 124-494 (AESLETNSCS…GKFLYFLRSR (371 aa)). Residues 208 to 219 (GSFKIRLSRLFR) show a composition bias toward basic residues. The segment covering 303 to 313 (PHPPTPPPPPR) has biased composition (pro residues). One can recognise an SH2 domain in the interval 400–509 (WYWGPMNWED…PTPVQLLYPV (110 aa)). Positions 504-554 (QLLYPVSRFSNVKSLQHLCRFRIRQLVRIDHIPDLPLPKPLISYIRKFYYY) constitute an SOCS box domain.

As to quaternary structure, substrate-recognition component of the ECS(SOCS7) complex, composed of SOCS7, CUL5, ELOB, ELOC and RNF7/RBX2. Interacts, via the third proline-rich region, with the second SH3 domain of the adapter protein NCK1. Also interacts with GRB2, INSR, PLCG1, SORBS3/vinexin, and phosphorylated STAT3 and STAT5. Interacts with SEPT6. Interacts with phosphorylated IRS4 and PIK3R1. In terms of tissue distribution, expressed in brain and leukocytes. Also in fetal lung fibroblasts and fetal brain.

The protein resides in the cytoplasm. It localises to the nucleus. The protein localises to the cell membrane. Its pathway is protein modification; protein ubiquitination. Functionally, substrate-recognition component of a cullin-5-RING E3 ubiquitin-protein ligase complex (ECS complex, also named CRL5 complex), which mediates the ubiquitination and subsequent proteasomal degradation of target proteins, such as DAB1 and IRS1. Specifically recognizes and binds phosphorylated proteins via its SH2 domain, promoting their ubiquitination. The ECS(SOCS7) complex acts as a key regulator of reelin signaling by mediating ubiquitination and degradation of phosphorylated DAB1 in the cortical plate of the developing cerebral cortex, thereby regulating neuron positioning during cortex development. Functions in insulin signaling and glucose homeostasis through IRS1 ubiquitination and subsequent proteasomal degradation. Also inhibits prolactin, growth hormone and leptin signaling by preventing STAT3 and STAT5 activation, sequestering them in the cytoplasm and reducing their binding to DNA. This Homo sapiens (Human) protein is Suppressor of cytokine signaling 7.